Consider the following 568-residue polypeptide: Pre-mRNA-processing protein 45 (568 aa).

3 disordered regions span residues 199-232 (EPPKFKHTKVPGRPASPPAPILRSPPRKLTAQDQ), 281-449 (LNQN…QQKI), and 545-568 (AGKGFEGADGEERDGPVRFVRDEE). Over residues 286–364 (KTMRDDIGKR…SRDGDSDRSL (79 aa)) the composition is skewed to basic and acidic residues. Low complexity predominate over residues 365-379 (SRSLSASDRSYSRSR). Composition is skewed to basic and acidic residues over residues 395-419 (RSPESRFRGRSDSRSRSPGYELERA), 426-440 (ERLERKREAERDLRL), and 557-568 (RDGPVRFVRDEE).

The protein belongs to the SNW family. Associated with the spliceosome.

It localises to the nucleus. Involved in pre-mRNA splicing. This Yarrowia lipolytica (strain CLIB 122 / E 150) (Yeast) protein is Pre-mRNA-processing protein 45 (PRP45).